Reading from the N-terminus, the 378-residue chain is Cytochrome P450 monooxygenase pytD (378 aa).

Heme is bound at residue Cys321.

The protein belongs to the cytochrome P450 family. It depends on heme as a cofactor.

It participates in secondary metabolite biosynthesis. Its function is as follows. Cytochrome P450 monooxygenase pytD; part of the gene cluster that mediates the biosynthesis of pyranterreones, a family of antioxidative compounds. The first step of pyranonigrins biosynthesis is performed by the hybrid PKS-NRPS synthetase pytA that condenses 4 malonyl-CoA units ato the acetyl starter unit by the modular PKS of pytA. The acyl chain is then connected to an L-serine through the amide bond by the modular NRPS of pytA. A tetramic acid is formed and released from the PKS-NRPS pytA to give pyranterreone 5 with the help of the thioesterase pytI. Pyranterreone 5 could be methylated by pytC to afford pyranterreone 6. Both pyranterreones 5 and 6 are subsequently oxidized by the FAD-linked oxidoreductase pytB and the cytochrome P450 monooxygenase pytD to form the fused gamma-pyrone core, resulting in pyranterreones 7 and 11, respectively. The hydroxy group at C-8 of pyranterreones 7 and 11 are dehydrated by the aspartyl protease pytH to form a delta-7 double bond to give pyranterreones 3 and 1, 2 accordingly. The exo-methylene of pyranterreone 3 could be reduced into a pendant methyl by reductase pytE to provide pyranterreone 4, also known as cordylactam. Pyranterreone 4 can be reconverted to pyranterreone 3 through pytB-catalyzed dehydrogenation or further oxidized to pyranterreones 9 and 10. This chain is Cytochrome P450 monooxygenase pytD, found in Aspergillus terreus (strain NIH 2624 / FGSC A1156).